A 957-amino-acid chain; its full sequence is Glycine dehydrogenase (decarboxylating) (957 aa).

An N6-(pyridoxal phosphate)lysine modification is found at Lys-708.

The protein belongs to the GcvP family. As to quaternary structure, the glycine cleavage system is composed of four proteins: P, T, L and H. Requires pyridoxal 5'-phosphate as cofactor.

It catalyses the reaction N(6)-[(R)-lipoyl]-L-lysyl-[glycine-cleavage complex H protein] + glycine + H(+) = N(6)-[(R)-S(8)-aminomethyldihydrolipoyl]-L-lysyl-[glycine-cleavage complex H protein] + CO2. Functionally, the glycine cleavage system catalyzes the degradation of glycine. The P protein binds the alpha-amino group of glycine through its pyridoxal phosphate cofactor; CO(2) is released and the remaining methylamine moiety is then transferred to the lipoamide cofactor of the H protein. The polypeptide is Glycine dehydrogenase (decarboxylating) (Escherichia coli (strain SE11)).